Here is a 752-residue protein sequence, read N- to C-terminus: Double zinc ribbon and ankyrin repeat-containing protein 1 (752 aa).

2 positions are modified to phosphoserine: serine 160 and serine 182. Residues 164–187 (IPAYGGGSGSRPPTRQSQSPGFAH) form a disordered region. A compositionally biased stretch (polar residues) spans 174–183 (RPPTRQSQSP). DZANK-type zinc fingers lie at residues 211–270 (CAHC…CVVC) and 339–387 (CYRC…GSCG). 2 ANK repeats span residues 605–636 (ENRL…DPNC) and 640–669 (DNRP…DIDQ).

Interacts with NINL isoform 2. Associates with DYNC1H1 and multiple dynein intermediate and light chains as well as actin-binding proteins.

The protein resides in the cytoplasm. The protein localises to the cytoskeleton. Its subcellular location is the microtubule organizing center. It localises to the centrosome. It is found in the cilium basal body. In terms of biological role, involved in vesicle transport in photoreceptor cells. The chain is Double zinc ribbon and ankyrin repeat-containing protein 1 from Homo sapiens (Human).